A 376-amino-acid chain; its full sequence is E3 ubiquitin-protein ligase RNF133 (376 aa).

The PA domain maps to 65-167 (SSTLKRVAGV…LKGTEIFHLI (103 aa)). The helical transmembrane segment at 190–210 (YLVSFVIVTTATLAYFIFYHI) threads the bilayer. The segment at 256–297 (CVICFEHYKPNDIVRILTCKHFFHKNCIDPWILSHGTCPICK) adopts an RING-type; atypical zinc-finger fold. Residues 328-376 (TLSPSEEETNNEVSPAGTSDKVIHVEENPTSQNNDSQPHSVVEDVHPSP) are disordered. Residues 355–366 (NPTSQNNDSQPH) show a composition bias toward polar residues.

In terms of assembly, interacts with E3 ligase UBE2J1. Post-translationally, auto-ubiquitinated.

It localises to the endoplasmic reticulum membrane. It carries out the reaction S-ubiquitinyl-[E2 ubiquitin-conjugating enzyme]-L-cysteine + [acceptor protein]-L-lysine = [E2 ubiquitin-conjugating enzyme]-L-cysteine + N(6)-ubiquitinyl-[acceptor protein]-L-lysine.. It functions in the pathway protein modification; protein ubiquitination. Its function is as follows. Has E3 ubiquitin-protein ligase activity. Plays a role in male fecundity through the interaction with the E2 ubituitin-protein ligase UBE2J1. The polypeptide is E3 ubiquitin-protein ligase RNF133 (RNF133) (Macaca fascicularis (Crab-eating macaque)).